The following is a 92-amino-acid chain: Small ribosomal subunit protein uS15 (92 aa).

Belongs to the universal ribosomal protein uS15 family. As to quaternary structure, part of the 30S ribosomal subunit. Forms a bridge to the 50S subunit in the 70S ribosome, contacting the 23S rRNA.

Functionally, one of the primary rRNA binding proteins, it binds directly to 16S rRNA where it helps nucleate assembly of the platform of the 30S subunit by binding and bridging several RNA helices of the 16S rRNA. In terms of biological role, forms an intersubunit bridge (bridge B4) with the 23S rRNA of the 50S subunit in the ribosome. The polypeptide is Small ribosomal subunit protein uS15 (Symbiobacterium thermophilum (strain DSM 24528 / JCM 14929 / IAM 14863 / T)).